The sequence spans 1018 residues: Calcium-transporting ATPase sarcoplasmic/endoplasmic reticulum type (1018 aa).

Topologically, residues 1–48 (MEDGHSKTVDEVLSHFRVDPERGLSLDQVKEYQKKYGPNELPAEEGKT) are cytoplasmic. Residues 49–69 (LWQLVLEQFDDLLVKILLLAA) traverse the membrane as a helical segment. Residues 70–88 (IISFVLALFEEHEGVEAFV) are Lumenal-facing. Residues 89–109 (EPFVILLILIANAVVGVWQER) traverse the membrane as a helical segment. Residues 110–252 (NAESAIEALK…EIKTPLQQKL (143 aa)) lie on the Cytoplasmic side of the membrane. Residues 253–272 (DEFGEQLSKVISLICVAVWA) traverse the membrane as a helical segment. The Lumenal portion of the chain corresponds to 273-294 (INIGHFNDPAHGGSWIKGAVYY). Residues 295–312 (FKIAVALAVAAIPEGLPA) traverse the membrane as a helical segment. 4 residues coordinate Ca(2+): valine 303, alanine 304, isoleucine 306, and glutamate 308. Residues 313 to 756 (VITTCLALGT…EEGRAIYNNM (444 aa)) are Cytoplasmic-facing. Residue aspartate 350 is the 4-aspartylphosphate intermediate of the active site. Residues aspartate 702 and aspartate 706 each contribute to the Mg(2+) site. Residues 757 to 776 (KQFIRYLISSNIGEVVSIFL) traverse the membrane as a helical segment. Residues asparagine 767 and glutamate 770 each contribute to the Ca(2+) site. Topologically, residues 777-786 (TAALGLPEAL) are lumenal. The helical transmembrane segment at 787-807 (IPVQLLWVNLVTDGLPATALG) threads the bilayer. 3 residues coordinate Ca(2+): asparagine 795, threonine 798, and aspartate 799. The Cytoplasmic portion of the chain corresponds to 808–827 (FNPPDLDIMTKPPRKADEGL). The helical transmembrane segment at 828–850 (ISGWLFFRYMAIGGYVGCATVGG) threads the bilayer. The Lumenal segment spans residues 851 to 896 (AAWWFMFSETGPQLSYWQLTHHLSCLGGGEEFKGIDCKIFNDPHPM). A helical transmembrane segment spans residues 897 to 916 (TMALSVLVTIEMLNAMNSLS). Glutamate 907 is a binding site for Ca(2+). The Cytoplasmic portion of the chain corresponds to 917-929 (ENQSLVQMPPWCN). The helical transmembrane segment at 930–948 (IWLIASMCLSFALHFVILY) threads the bilayer. The Lumenal segment spans residues 949–963 (VDVLSTVFQVTPLDG). Residues 964 to 984 (NEWMTVMKFSLPVVLLDEILK) traverse the membrane as a helical segment. Residues 985–1018 (FVARRISDGESYIKNMHGLVLAWAVFFAYIIWGP) are Cytoplasmic-facing.

It belongs to the cation transport ATPase (P-type) (TC 3.A.3) family.

It localises to the endoplasmic reticulum membrane. It is found in the sarcoplasmic reticulum membrane. The enzyme catalyses Ca(2+)(in) + ATP + H2O = Ca(2+)(out) + ADP + phosphate + H(+). This magnesium-dependent enzyme catalyzes the hydrolysis of ATP coupled with the transport of calcium. The sequence is that of Calcium-transporting ATPase sarcoplasmic/endoplasmic reticulum type from Anopheles gambiae (African malaria mosquito).